Here is a 453-residue protein sequence, read N- to C-terminus: Ribosomal protein uS12 methylthiotransferase RimO (453 aa).

The MTTase N-terminal domain maps to 5–120; sequence PKVGFVSLGC…VMQAVHSHLP (116 aa). C14, C50, C79, C151, C155, and C158 together coordinate [4Fe-4S] cluster. The Radical SAM core domain occupies 137 to 382; it reads LTPRHYAYLK…MEVAEEVSAN (246 aa). The region spanning 385–453 is the TRAM domain; that stretch reads QRKVGKTLKV…ADGHDLWGEV (69 aa).

The protein belongs to the methylthiotransferase family. RimO subfamily. It depends on [4Fe-4S] cluster as a cofactor.

The protein localises to the cytoplasm. It catalyses the reaction L-aspartate(89)-[ribosomal protein uS12]-hydrogen + (sulfur carrier)-SH + AH2 + 2 S-adenosyl-L-methionine = 3-methylsulfanyl-L-aspartate(89)-[ribosomal protein uS12]-hydrogen + (sulfur carrier)-H + 5'-deoxyadenosine + L-methionine + A + S-adenosyl-L-homocysteine + 2 H(+). Catalyzes the methylthiolation of an aspartic acid residue of ribosomal protein uS12. The chain is Ribosomal protein uS12 methylthiotransferase RimO from Burkholderia cenocepacia (strain HI2424).